We begin with the raw amino-acid sequence, 135 residues long: Ribosome-binding factor A (135 aa).

It belongs to the RbfA family. In terms of assembly, monomer. Binds 30S ribosomal subunits, but not 50S ribosomal subunits or 70S ribosomes.

It is found in the cytoplasm. Functionally, one of several proteins that assist in the late maturation steps of the functional core of the 30S ribosomal subunit. Associates with free 30S ribosomal subunits (but not with 30S subunits that are part of 70S ribosomes or polysomes). Required for efficient processing of 16S rRNA. May interact with the 5'-terminal helix region of 16S rRNA. The protein is Ribosome-binding factor A of Caldicellulosiruptor saccharolyticus (strain ATCC 43494 / DSM 8903 / Tp8T 6331).